The following is a 92-amino-acid chain: Large ribosomal subunit protein bL28 (92 aa).

The protein belongs to the bacterial ribosomal protein bL28 family.

The polypeptide is Large ribosomal subunit protein bL28 (Borrelia hermsii (strain HS1 / DAH)).